The sequence spans 172 residues: MASNFKKANMASTTQRKRMSPKPELTEEQKQEIREAFDLFDADGTGTIDVKELKVAMRALGFEPKKEEIKKMISEIDKEGTGKMNFSDFLTVMTQKMSEKDTKEEILKAFKLFDDDETGKISFKNLKRVAKELGENLSDEELQEMIDEADRDGDGEVNEQEFLRIMKKTSLY.

Positions 1–31 (MASNFKKANMASTTQRKRMSPKPELTEEQKQ) are disordered. Ala-2 is subject to N-acetylalanine. The segment at 2 to 25 (ASNFKKANMASTTQRKRMSPKPEL) is required for self-assembly. Phosphoserine is present on Ser-20. A Glycyl lysine isopeptide (Lys-Gly) (interchain with G-Cter in SUMO2) cross-link involves residue Lys-22. Thr-26 is modified (phosphothreonine). EF-hand domains follow at residues 28-63 (EQKQ…LGFE), 64-99 (PKKE…KMSE), 101-136 (DTKE…LGEN), and 137-172 (LSDE…TSLY). Residues Asp-41, Asp-43, Thr-45, Thr-47, and Glu-52 each coordinate Ca(2+). Asp-150, Asp-152, Asp-154, Glu-156, and Glu-161 together coordinate Ca(2+).

The protein belongs to the centrin family. Monomer. Homooligomer. Interacts with CCP110, SFI1. Component of the XPC complex composed of XPC, RAD23B and CETN2. Component of the nuclear pore complex (NPC)-associated TREX-2 complex (transcription and export complex 2), composed of at least GANP, 2 copies of ENY2, PCID2, SEM1/DSS1, and either centrin CETN2 or centrin CETN3. The TREX-2 complex also associates with ALYREF/ALY and with the nucleoporin NUP153. Interacts with USP49. Forms a microtubule-associated complex with POC5, POC1B and FAM161A. Interacts with CCDC15.

It localises to the cytoplasm. The protein localises to the cytoskeleton. Its subcellular location is the microtubule organizing center. It is found in the centrosome. The protein resides in the centriole. It localises to the nucleus. The protein localises to the nucleus envelope. Its subcellular location is the nuclear pore complex. Plays a fundamental role in microtubule organizing center structure and function. Required for centriole duplication and correct spindle formation. Has a role in regulating cytokinesis and genome stability via cooperation with CALM1 and CCP110. Its function is as follows. Involved in global genome nucleotide excision repair (GG-NER) by acting as component of the XPC complex. Cooperatively with RAD23B appears to stabilize XPC. In vitro, stimulates DNA binding of the XPC:RAD23B dimer. In terms of biological role, the XPC complex is proposed to represent the first factor bound at the sites of DNA damage and together with other core recognition factors, XPA, RPA and the TFIIH complex, is part of the pre-incision (or initial recognition) complex. The XPC complex recognizes a wide spectrum of damaged DNA characterized by distortions of the DNA helix such as single-stranded loops, mismatched bubbles or single-stranded overhangs. The orientation of XPC complex binding appears to be crucial for inducing a productive NER. XPC complex is proposed to recognize and to interact with unpaired bases on the undamaged DNA strand which is followed by recruitment of the TFIIH complex and subsequent scanning for lesions in the opposite strand in a 5'-to-3' direction by the NER machinery. Cyclobutane pyrimidine dimers (CPDs) which are formed upon UV-induced DNA damage esacpe detection by the XPC complex due to a low degree of structural perurbation. Instead they are detected by the UV-DDB complex which in turn recruits and cooperates with the XPC complex in the respective DNA repair. Functionally, as a component of the TREX-2 complex, involved in the export of mRNAs to the cytoplasm through the nuclear pores. In Bos taurus (Bovine), this protein is Centrin-2 (CETN2).